The sequence spans 144 residues: Ribosomal RNA large subunit methyltransferase H (144 aa).

S-adenosyl-L-methionine contacts are provided by residues leucine 63, glycine 92, and 111-116; that span reads LSPMTF.

It belongs to the RNA methyltransferase RlmH family. In terms of assembly, homodimer.

The protein resides in the cytoplasm. It catalyses the reaction pseudouridine(1915) in 23S rRNA + S-adenosyl-L-methionine = N(3)-methylpseudouridine(1915) in 23S rRNA + S-adenosyl-L-homocysteine + H(+). Its function is as follows. Specifically methylates the pseudouridine at position 1915 (m3Psi1915) in 23S rRNA. In Synechococcus sp. (strain CC9605), this protein is Ribosomal RNA large subunit methyltransferase H.